A 360-amino-acid chain; its full sequence is Archaemetzincin-2 (360 aa).

H254 contacts Zn(2+). E255 functions as the Proton acceptor in the catalytic mechanism. The Zn(2+) site is built by H258, H264, C265, C270, C289, and C292.

This sequence belongs to the peptidase M54 family. It depends on Zn(2+) as a cofactor. As to expression, down-regulated in testis from patients with maturation arrest (MA) or Sertoli cell-only syndrome (SCOS).

Probable zinc metalloprotease. In Homo sapiens (Human), this protein is Archaemetzincin-2 (AMZ2).